The chain runs to 101 residues: NAD(P)H-quinone oxidoreductase subunit 4L, chloroplastic (101 aa).

Helical transmembrane passes span 2–22 (MLEY…YGLI), 32–52 (MCLE…SDFF), and 61–81 (IFSI…PAIV).

Belongs to the complex I subunit 4L family. NDH is composed of at least 16 different subunits, 5 of which are encoded in the nucleus.

Its subcellular location is the plastid. It is found in the chloroplast thylakoid membrane. The enzyme catalyses a plastoquinone + NADH + (n+1) H(+)(in) = a plastoquinol + NAD(+) + n H(+)(out). It carries out the reaction a plastoquinone + NADPH + (n+1) H(+)(in) = a plastoquinol + NADP(+) + n H(+)(out). Functionally, NDH shuttles electrons from NAD(P)H:plastoquinone, via FMN and iron-sulfur (Fe-S) centers, to quinones in the photosynthetic chain and possibly in a chloroplast respiratory chain. The immediate electron acceptor for the enzyme in this species is believed to be plastoquinone. Couples the redox reaction to proton translocation, and thus conserves the redox energy in a proton gradient. In Populus trichocarpa (Western balsam poplar), this protein is NAD(P)H-quinone oxidoreductase subunit 4L, chloroplastic.